A 179-amino-acid chain; its full sequence is Large ribosomal subunit protein uL5 (179 aa).

Belongs to the universal ribosomal protein uL5 family. Part of the 50S ribosomal subunit; part of the 5S rRNA/L5/L18/L25 subcomplex. Contacts the 5S rRNA and the P site tRNA. Forms a bridge to the 30S subunit in the 70S ribosome.

In terms of biological role, this is one of the proteins that bind and probably mediate the attachment of the 5S RNA into the large ribosomal subunit, where it forms part of the central protuberance. In the 70S ribosome it contacts protein S13 of the 30S subunit (bridge B1b), connecting the 2 subunits; this bridge is implicated in subunit movement. Contacts the P site tRNA; the 5S rRNA and some of its associated proteins might help stabilize positioning of ribosome-bound tRNAs. The protein is Large ribosomal subunit protein uL5 of Bacillus pumilus (strain SAFR-032).